Here is an 808-residue protein sequence, read N- to C-terminus: Probable potassium transporter 3 (808 aa).

Residues 1 to 34 (MPVADCESGLSPADVTGAGAANGNPGHWRSYYRH) are Cytoplasmic-facing. The chain crosses the membrane as a helical span at residues 35-55 (VLLLAYQSCGVVYGDLSTSPL). Topologically, residues 56-81 (YVYKSTFIIGSLRRFQDEEIVFGVFS) are extracellular. A helical transmembrane segment spans residues 82-102 (LVFWTLTLIPLLKYVFIVLAA). Topologically, residues 103–167 (DDNGEGGTFA…FLENHRKSRT (65 aa)) are cytoplasmic. The helical transmembrane segment at 168 to 188 (FLLVTVLFGASLVIGDGVLTP) threads the bilayer. Topologically, residues 189-204 (PMSVLSSFSGLQVHST) are extracellular. A helical transmembrane segment spans residues 205–225 (ALTSGEVEILSCTVLVCLFMV). Residues 226 to 232 (QHWGTHR) are Cytoplasmic-facing. The chain crosses the membrane as a helical span at residues 233-253 (VAFLFAPVVIVWLLLLGALGV). At 254–283 (YNIVVWNPRVLRALSPYYLVRFFQHTGKDG) the chain is on the extracellular side. Residues 284–304 (WISLGGILLSMTGTEAMYADL) form a helical membrane-spanning segment. Residues 305–313 (GHFTAASIR) lie on the Cytoplasmic side of the membrane. The helical transmembrane segment at 314 to 334 (VAFVGLIYPCLVLQYMGQAAF) threads the bilayer. Over 335–354 (LSKSPHCDIHFVFFESIPTG) the chain is Extracellular. The helical transmembrane segment at 355–375 (IFWPVLVIATLAAIVGSQAVI) threads the bilayer. Over 376–406 (SATFSIVRQCTALGCFPRVKIVHTSRRIHGQ) the chain is Cytoplasmic. A helical membrane pass occupies residues 407 to 427 (IYSPEINWILMLLCIAVTMGL). Over 428 to 439 (RDTTLIGNAYGM) the chain is Extracellular. Residues 440–460 (ACAGVMLVTTLLMALVIVFVW) traverse the membrane as a helical segment. At 461 to 464 (QYSC) the chain is on the cytoplasmic side. The helical transmembrane segment at 465–485 (LVAALFLVAFGVVEAVYLSAA) threads the bilayer. At 486–491 (LMKVPQ) the chain is on the extracellular side. A helical membrane pass occupies residues 492–512 (GGWLPLVLSLVFVAVMYVWHY). At 513-808 (GTRRKHQFDV…LIEVGMIYYV (296 aa)) the chain is on the cytoplasmic side.

The protein belongs to the HAK/KUP transporter (TC 2.A.72.3) family.

Its subcellular location is the membrane. Its function is as follows. High-affinity potassium transporter. The chain is Probable potassium transporter 3 (HAK3) from Oryza sativa subsp. japonica (Rice).